The following is a 480-amino-acid chain: CASP8 and FADD-like apoptosis regulator (480 aa).

DED domains lie at 1–73 and 92–170; these read MSAE…RILK and DYRV…KIQK. Positions 1–195 are interaction with CASP8; that stretch reads MSAEVIHQVE…LQAAIQKSLK (195 aa). The tract at residues 1 to 227 is interaction with FADD; it reads MSAEVIHQVE…GAQQEPVKKS (227 aa). An interaction with CASP8 propeptide region spans residues 1–305; that stretch reads MSAEVIHQVE…FACMPEHRDY (305 aa). The not proteolytically processed and involved in apoptosis inhibition stretch occupies residues 1-435; it reads MSAEVIHQVE…CLSQKLRQER (435 aa). The interaction with CASP3 stretch occupies residues 192–435; that stretch reads KSLKDPSNNF…CLSQKLRQER (244 aa). Residues 192 to 480 are interaction with TRAF1 and TRAF2; that stretch reads KSLKDPSNNF…LRKKLILSYT (289 aa). An interaction with CASP8 subunits p18 and p10 region spans residues 217 to 480; the sequence is LGAQQEPVKK…LRKKLILSYT (264 aa). The segment at 263 to 358 is caspase; the sequence is ETELLRDTFT…AGKPKMFFIQ (96 aa). Positions 370–480 are interaction with CASP8; the sequence is SSLLEVDGPA…LRKKLILSYT (111 aa).

It belongs to the peptidase C14A family. In terms of assembly, TNFRSF6 stimulation triggers recruitment to the death-inducing signaling complex (DISC) formed by TNFRSF6, FADD and CASP8. A proteolytic fragment (p43) stays associated with the DISC. Also interacts with FADD, CASP8, CASP3, TRAF1, TRAF2 and Bcl-X(L) (in vitro). Interacts with RIPK1. As to quaternary structure, (Microbial infection) Interacts with HBV protein X. Proteolytically processed by CASP8 generating subunit p43 and p12. As to expression, widely expressed. Higher expression in skeletal muscle, pancreas, heart, kidney, placenta, and peripheral blood leukocytes. Also detected in diverse cell lines. Isoform 8 is predominantly expressed in testis and skeletal muscle.

Functionally, apoptosis regulator protein which may function as a crucial link between cell survival and cell death pathways in mammalian cells. Acts as an inhibitor of TNFRSF6 mediated apoptosis. A proteolytic fragment (p43) is likely retained in the death-inducing signaling complex (DISC) thereby blocking further recruitment and processing of caspase-8 at the complex. Full length and shorter isoforms have been shown either to induce apoptosis or to reduce TNFRSF-triggered apoptosis. Lacks enzymatic (caspase) activity. The chain is CASP8 and FADD-like apoptosis regulator (CFLAR) from Homo sapiens (Human).